The sequence spans 817 residues: Leucine--tRNA ligase (817 aa).

The 'HIGH' region motif lies at 42–52; the sequence is PYPSGRLHMGH. The 'KMSKS' region signature appears at 576 to 580; sequence KMSKS. Lys-579 serves as a coordination point for ATP.

It belongs to the class-I aminoacyl-tRNA synthetase family.

Its subcellular location is the cytoplasm. The catalysed reaction is tRNA(Leu) + L-leucine + ATP = L-leucyl-tRNA(Leu) + AMP + diphosphate. This chain is Leucine--tRNA ligase, found in Halorhodospira halophila (strain DSM 244 / SL1) (Ectothiorhodospira halophila (strain DSM 244 / SL1)).